Consider the following 458-residue polypeptide: Phosphoglucosamine mutase (458 aa).

Serine 106 (phosphoserine intermediate) is an active-site residue. Residues serine 106, aspartate 247, aspartate 249, and aspartate 251 each coordinate Mg(2+). Phosphoserine is present on serine 106.

The protein belongs to the phosphohexose mutase family. Mg(2+) is required as a cofactor. Post-translationally, activated by phosphorylation.

It catalyses the reaction alpha-D-glucosamine 1-phosphate = D-glucosamine 6-phosphate. Its function is as follows. Catalyzes the conversion of glucosamine-6-phosphate to glucosamine-1-phosphate. This chain is Phosphoglucosamine mutase, found in Chlamydia trachomatis serovar D (strain ATCC VR-885 / DSM 19411 / UW-3/Cx).